The following is a 178-amino-acid chain: Protein FAM89A (178 aa).

Belongs to the FAM89 family.

The chain is Protein FAM89A (FAM89A) from Bos taurus (Bovine).